A 147-amino-acid polypeptide reads, in one-letter code: METLTAISRWLAKQHVVTWCVQQEGELWCANAFYLFDVQKVAFYILTEEKTRHAQMRGPQAAVAGTVNGQPKTVALIRGVQFKGEIRRLEGEESDLARKAYNRRFPVARMLSAPVWEIRPDEIKFTDNTLGFGKKMIWLRGSGTEQA.

The protein belongs to the UPF0306 family.

This chain is UPF0306 protein YhbP, found in Escherichia coli O157:H7 (strain EC4115 / EHEC).